The following is a 105-amino-acid chain: Photosystem II 5 kDa protein, chloroplastic (105 aa).

The transit peptide at 1–77 (MASITMTTSF…ICSVAGVATA (77 aa)) directs the protein to the chloroplast.

Post-translationally, the maturation of the PSII-T precursor to its final form occurs through a two step process. First, a stromal intermediate is formed, which, upon translocation into the thylakoid membrane, is processed to the mature protein.

It is found in the plastid. It localises to the chloroplast thylakoid membrane. May be a component of the oxygen-evolving complex. This Gossypium hirsutum (Upland cotton) protein is Photosystem II 5 kDa protein, chloroplastic (PSBT).